The primary structure comprises 132 residues: Small ribosomal subunit protein uS8 (132 aa).

It belongs to the universal ribosomal protein uS8 family. Part of the 30S ribosomal subunit. Contacts proteins S5 and S12.

One of the primary rRNA binding proteins, it binds directly to 16S rRNA central domain where it helps coordinate assembly of the platform of the 30S subunit. This Mycolicibacterium gilvum (strain PYR-GCK) (Mycobacterium gilvum (strain PYR-GCK)) protein is Small ribosomal subunit protein uS8.